A 528-amino-acid polypeptide reads, in one-letter code: Neuronal acetylcholine receptor subunit alpha-2 (528 aa).

A signal peptide spans 1 to 23; the sequence is MGWPCRSIIPLLVWCFVTLQAAT. Over 24–239 the chain is Extracellular; the sequence is REQKQPHGFA…ITFYFVIRRL (216 aa). 2 N-linked (GlcNAc...) asparagine glycosylation sites follow: N54 and N104. Intrachain disulfides connect C158–C172 and C222–C223. Helical transmembrane passes span 240–264, 272–290, and 306–327; these read PLFYTINLIIPCLLISCLTVLVFYL, ITLCISVLLSLTVFLLLIT, and YLLFTMIFVTLSIIITVFVLNV. The Cytoplasmic segment spans residues 328–501; the sequence is HHRSPSTHTM…WKYVAMVIDR (174 aa). A compositionally biased stretch (acidic residues) spans 390 to 410; that stretch reads DDKWEEEEEEEEEEEEEEEEE. A disordered region spans residues 390 to 427; it reads DDKWEEEEEEEEEEEEEEEEEKAYPSRVPSGGSQGTQC. The chain crosses the membrane as a helical span at residues 502-520; the sequence is IFLWMFIIVCLLGTVGLFL.

The protein belongs to the ligand-gated ion channel (TC 1.A.9) family. Acetylcholine receptor (TC 1.A.9.1) subfamily. Alpha-2/CHRNA2 sub-subfamily. Neuronal AChR is composed of two different types of subunits: alpha and non-alpha (beta). CHRNA2/alpha-2 subunit can be combined to CHRNB2/beta-2 or CHRNB4/beta-4 to give rise to functional receptors. Both CHRNA2:CHRNB2 and CHRNA2:CHRNB4 nAChR complexes are heteropentamers with two subtypes: LS (low agonist sensitivity) with a (CHRNA2)3:(CHRNB2/4)2 and HS (high agonist sensitivity) with a (CHRNA2)2:(CHRNB2/4)3 stoichiometries; the subtypes differ in their subunit binding interfaces which are involved in ligand binding.

It localises to the synaptic cell membrane. Its subcellular location is the cell membrane. It catalyses the reaction Ca(2+)(in) = Ca(2+)(out). The enzyme catalyses K(+)(in) = K(+)(out). It carries out the reaction Na(+)(in) = Na(+)(out). Functionally, component of neuronal acetylcholine receptors (nAChRs) that function as pentameric, ligand-gated cation channels with high calcium permeability among other activities. nAChRs are excitatory neurotrasnmitter receptors formed by a collection of nAChR subunits known to mediate synaptic transmission in the nervous system and the neuromuscular junction. Each nAchR subunit confers differential attributes to channel properties, including activation, deactivation and desensitization kinetics, pH sensitivity, cation permeability, and binding to allosteric modulators. CHRNA2 forms heteropentameric neuronal acetylcholine receptors with CHRNB2 and CHRNB4 and plays a role in nicotine dependence. This chain is Neuronal acetylcholine receptor subunit alpha-2 (CHRNA2), found in Gallus gallus (Chicken).